We begin with the raw amino-acid sequence, 429 residues long: Zinc-regulated GTPase metalloprotein activator 1 (429 aa).

Positions G15 to T22 match the psi-PxLVp motif motif. Residue G78–S85 participates in GTP binding. Zn(2+) contacts are provided by C136, C138, and C139. The CXCC motif signature appears at C136 to C139. GTP contacts are provided by residues C139–N143 and N244–D247. One can recognise a CobW C-terminal domain in the interval R362–L428.

This sequence belongs to the SIMIBI class G3E GTPase family. ZNG1 subfamily.

The enzyme catalyses GTP + H2O = GDP + phosphate + H(+). In terms of biological role, zinc chaperone that directly transfers zinc cofactor to target metalloproteins, thereby activating them. Catalyzes zinc insertion into the active site of methionine aminopeptidase MAP1, which function to cleave the initiator methionine from polypeptides during or after protein translation. Mechanistically, the N-terminal psi-PxLVp motif binds to the C6H2-type zinc finger of inactive form of MAP1. After formation of the docked complex, zinc is transferred from the CXCC motif in the GTPase domain of ZNG1 to the zinc binding site in the peptidase domain of MAP1 in a process requiring GTP hydrolysis. GTP/GDP exchange is required for release of active MAP1. The sequence is that of Zinc-regulated GTPase metalloprotein activator 1 from Saccharomyces cerevisiae (strain ATCC 204508 / S288c) (Baker's yeast).